The sequence spans 330 residues: Homeobox protein Hox-C13 (330 aa).

The segment covering Gly-30–Ser-47 has biased composition (gly residues). Residues Gly-30 to Ser-50 form a disordered region. Residues Gly-260–Val-319 constitute a DNA-binding region (homeobox).

The protein belongs to the Abd-B homeobox family.

The protein resides in the nucleus. Functionally, transcription factor which plays a role in hair follicle differentiation. Regulates FOXQ1 expression and that of other hair-specific genes. The protein is Homeobox protein Hox-C13 (HOXC13) of Homo sapiens (Human).